The sequence spans 215 residues: Uracil phosphoribosyltransferase (215 aa).

30-34 (KGMVR) contacts GTP. 5-phospho-alpha-D-ribose 1-diphosphate is bound by residues Arg80, Arg105, and 139 to 147 (DPMIATAST). Residues Ile202 and 207–209 (GDA) contribute to the uracil site. Asp208 contributes to the 5-phospho-alpha-D-ribose 1-diphosphate binding site.

It belongs to the UPRTase family. It depends on Mg(2+) as a cofactor.

It catalyses the reaction UMP + diphosphate = 5-phospho-alpha-D-ribose 1-diphosphate + uracil. Its pathway is pyrimidine metabolism; UMP biosynthesis via salvage pathway; UMP from uracil: step 1/1. With respect to regulation, allosterically activated by GTP. Functionally, catalyzes the conversion of uracil and 5-phospho-alpha-D-ribose 1-diphosphate (PRPP) to UMP and diphosphate. The chain is Uracil phosphoribosyltransferase from Metallosphaera sedula (strain ATCC 51363 / DSM 5348 / JCM 9185 / NBRC 15509 / TH2).